A 427-amino-acid chain; its full sequence is MPIHIIDRRLNPGGKSLENRQRFLRRAKSLVQGAVKKTSQERDIKDVLEGGEVTIPLDGMHEPRFRREGGTRDMVLPGNKKFVEGDYLQRSGQGSAKDSGPGEGDSEDAFRFVLSRDEFVDLFLDDLELPDLAKRKIAQTESEGIQRAGYTTSGSPANISVSRTVKLALARRIALKRPRKDEIEELEAAIAACTDEDERVVLLAELEKLMAKTKRIPFIDPLDIRYRRFETVPKPVAQAVMFCLMDVSGSMSEHMKDLAKRFYMLLYVFLKRRYKHVEIVFIRHTDRAEEVDEQTFFYGPASGGTLVSSALQAMHDIVRERFNPSDWNIYAAQASDGDNSYSDGELTGLLLTDKILPVCQFFAYLEVGESGGSAFDLSDSSLWTLYERLRNSGAPLSMRKVSERSEIFPVFHDLFQRRETSQEKAAP.

Residues 86-107 form a disordered region; it reads DYLQRSGQGSAKDSGPGEGDSE.

This sequence belongs to the UPF0229 family.

This Bradyrhizobium diazoefficiens (strain JCM 10833 / BCRC 13528 / IAM 13628 / NBRC 14792 / USDA 110) protein is UPF0229 protein bll6755.